The following is a 257-amino-acid chain: Achaete-scute complex protein T3 (257 aa).

The bHLH domain maps to 83 to 145; the sequence is PSVARRNARE…RIAVEYIRGL (63 aa). A disordered region spans residues 161–221; sequence YNSADESSND…SEISGGGYIK (61 aa). Composition is skewed to low complexity over residues 165–184 and 193–213; these read DESS…LDSS and QSAQ…SGSE.

As to quaternary structure, efficient DNA binding requires dimerization with another bHLH protein. L(1)SC, SC and AC strongly label the presumptive stomatogastric nervous system, while ASE is more prominent in the presumptive procephalic lobe.

In terms of biological role, AS-C proteins are involved in the determination of the neuronal precursors in the peripheral nervous system and the central nervous system. The protein is Achaete-scute complex protein T3 (l(1)sc) of Drosophila melanogaster (Fruit fly).